The following is a 430-amino-acid chain: Oleandomycin glycosyltransferase (430 aa).

Positions 385 to 430 (GGTRRAADLIEAELPARHERQEPVGDRPNVGDRPAGVRSDRQRSAL) are disordered. Residues 386–409 (GTRRAADLIEAELPARHERQEPVG) are compositionally biased toward basic and acidic residues.

It belongs to the UDP-glycosyltransferase family.

In terms of biological role, specifically inactivates oleandomycin via 2'-O-glycosylation using UDP-glucose. This is Oleandomycin glycosyltransferase (oleD) from Streptomyces antibioticus.